The primary structure comprises 184 residues: MESFSSKSLALQAEKKLLSKMAGRSVAHLFIDETSSEVLDELYRVSKEYTHSRSKAQRVIKDLIKVAVKVAVLHRSGCFSPGELALATRFRQKLRQGAMTALSFGEVDFTFEAAVLAGLLIECREILLELVEHHLTPKSHDRIRHVFDHYSDPDLLTALYGPDFTQHLDKICDGLRKLLDEGKL.

Ser3 carries the post-translational modification Phosphoserine.

The protein belongs to the TNFAIP8 family. TNFAIP8L2 subfamily. As to quaternary structure, may interact with CASP8; however, such result is unclear since could not reproduce the interaction with CASP8. Interacts with RAC1. Phosphorylated by TAK1/MAP3K7; this phosphorylation triggers association with BTRC and subsequent ubiquitination and degradation. Post-translationally, ubiquitinated in a BTRC-depdent manner; leading to degradation mediated through the proteasome pathway.

It is found in the cytoplasm. Its subcellular location is the nucleus. The protein resides in the lysosome. Functionally, acts as a negative regulator of innate and adaptive immunity by maintaining immune homeostasis. Plays a regulatory role in the Toll-like signaling pathway by determining the strength of LPS-induced signaling and gene expression. Inhibits TCR-mediated T-cell activation and negatively regulate T-cell function to prevent hyperresponsiveness. Also inhibits autolysosome formation via negatively modulating MTOR activation by interacting with RAC1 and promoting the disassociation of the RAC1-MTOR complex. Plays an essential role in NK-cell biology by acting as a checkpoint and displaying an expression pattern correlating with NK-cell maturation process and by negatively regulating NK-cell maturation and antitumor immunity. Mechanistically, suppresses IL-15-triggered mTOR activity in NK-cells. This chain is Tumor necrosis factor alpha-induced protein 8-like protein 2 (Tnfaip8l2), found in Rattus norvegicus (Rat).